The chain runs to 133 residues: Transcription antitermination protein NusB (133 aa).

This sequence belongs to the NusB family.

Its function is as follows. Involved in transcription antitermination. Required for transcription of ribosomal RNA (rRNA) genes. Binds specifically to the boxA antiterminator sequence of the ribosomal RNA (rrn) operons. This chain is Transcription antitermination protein NusB, found in Pediococcus pentosaceus (strain ATCC 25745 / CCUG 21536 / LMG 10740 / 183-1w).